The chain runs to 249 residues: Type I iodothyronine deiodinase (249 aa).

Residues 1–12 (MGLPQPGLWLKR) lie on the Extracellular side of the membrane. The chain crosses the membrane as a helical; Signal-anchor for type III membrane protein span at residues 13–33 (LWVLLEVAVHVVVGKVLLILF). Residues 34–249 (PDRVKRNILA…VRAVLEKLHS (216 aa)) are Cytoplasmic-facing. The active site involves Sec126. Position 126 (Sec126) is a non-standard amino acid, selenocysteine.

It belongs to the iodothyronine deiodinase family. Predominantly monomer. Can form homodimers but homodimerization is not essential for enzyme activity.

The protein localises to the cell membrane. It localises to the endoplasmic reticulum membrane. Its subcellular location is the basolateral cell membrane. The enzyme catalyses 3,3',5-triiodo-L-thyronine + iodide + A + H(+) = L-thyroxine + AH2. It catalyses the reaction 3,3',5'-triiodo-L-thyronine + iodide + A + H(+) = L-thyroxine + AH2. The catalysed reaction is 3,3'-diiodo-L-thyronine + iodide + A + H(+) = 3,3',5'-triiodo-L-thyronine + AH2. It carries out the reaction 3,3'-diiodo-L-thyronine + iodide + A + H(+) = 3,3',5-triiodo-L-thyronine + AH2. The enzyme catalyses 3'-iodo-L-thyronine + iodide + A + H(+) = 3',5'-diiodo-L-thyronine + AH2. It catalyses the reaction 3-iodo-L-thyronine + iodide + A + H(+) = 3,5-diiodo-L-thyronine + AH2. The catalysed reaction is 3-iodo-L-thyronine + iodide + A + H(+) = 3,3'-diiodo-L-thyronine + AH2. It carries out the reaction 3,3'-diiodothyronamine + iodide + A + H(+) = 3,3',5'-triiodothyronamine + AH2. The enzyme catalyses 3'-iodothyronamine + iodide + A + H(+) = 3',5'-diiodothyronamine + AH2. It catalyses the reaction 3-iodothyronamine + iodide + A + H(+) = 3,3'-diiodothyronamine + AH2. The catalysed reaction is 3,3'-diiodothyronamine + iodide + A + H(+) = 3,3',5-triiodothyronamine + AH2. It carries out the reaction 3-iodothyronamine + iodide + A + H(+) = 3,5-diiodothyronamine + AH2. The enzyme catalyses 3,3'-diiodo-L-thyronine sulfate + iodide + A + H(+) = 3,3',5'-triiodo-L-thyronine sulfate + AH2. It catalyses the reaction 3,3',5'-triiodo-L-thyronine sulfate + iodide + A + H(+) = L-thyroxine sulfate + AH2. The catalysed reaction is 3,3'-diiodo-L-thyronine sulfate + iodide + A + H(+) = 3,3',5-triiodo-L-thyronine sulfate + AH2. With respect to regulation, deiodination of substrates 3,3',5'-triiodothyronine, 3,3',5'-triiodothyronamine and 3',5'- diiodothyronamine are inhibited by 6n-propyl-2-thiouracil (PTU). In terms of biological role, plays a crucial role in the metabolism of thyroid hormones (TH) and has specific roles in TH activation and inactivation by deiodination. Catalyzes the deiodination of L-thyroxine (T4) to 3,5,3'-triiodothyronine (T3), 3,3',5'-triiodothyronine (rT3) to 3,3'-diiodothyronine (3,3'-T2) and 3',5'-diiodothyronine (3',5'-T2) to 3'-monoiodothyronine (3'-T1) via outer-ring deiodination (ORD). Catalyzes the deiodination of T4 to 3,3',5'-triiodothyronine (rT3) via inner-ring deiodination (IRD). Catalyzes the deiodination of T3 to 3,3'-T2, 3,5-diiodothyronine (3,5-T2) to 3- monoiodothyronine (3-T1) and 3,3'-T2 to 3-T1 via IRD. Catalyzes the phenolic ring deiodinations of 3,3',5'-triiodothyronamine and 3',5'-diiodothyronamine. Catalyzes the phenolic ring deiodination of 3,3'-diiodothyronamine and tyrosyl ring deiodinations of 3,5,3'-triiodothyronamine and 3,5-diiodothyronamine. Catalyzes the deiodination of L-thyroxine sulfate and 3,3',5-triiodo-L-thyronine sulfate via IRD and of 3,3',5'-triiodo-L-thyronine sulfate via ORD. This is Type I iodothyronine deiodinase (DIO1) from Homo sapiens (Human).